A 348-amino-acid chain; its full sequence is D-alanine--D-alanine ligase (348 aa).

Positions 132 to 334 (KRVLESAGIP…YSDLIEELVS (203 aa)) constitute an ATP-grasp domain. 162-217 (LETLSFPIFVKPANMGSSVGISKAESIEGLREAIALALKYDSRILIEQGVVAREIE) contributes to the ATP binding site. 3 residues coordinate Mg(2+): Asp288, Glu301, and Asn303.

Belongs to the D-alanine--D-alanine ligase family. The cofactor is Mg(2+). It depends on Mn(2+) as a cofactor.

Its subcellular location is the cytoplasm. The catalysed reaction is 2 D-alanine + ATP = D-alanyl-D-alanine + ADP + phosphate + H(+). Its pathway is cell wall biogenesis; peptidoglycan biosynthesis. In terms of biological role, cell wall formation. The sequence is that of D-alanine--D-alanine ligase from Streptococcus uberis (strain ATCC BAA-854 / 0140J).